Consider the following 350-residue polypeptide: WUSCHEL-related homeobox 1 (350 aa).

The segment at residues 72–136 (MVSSRWNPTP…NHKARERQKR (65 aa)) is a DNA-binding region (homeobox; WUS-type). Residues 283–308 (TNTETCHRNGDDNKDQEQHEDCSNGE) form a disordered region.

It belongs to the WUS homeobox family.

Its subcellular location is the nucleus. In terms of biological role, transcription factor which may be involved in developmental processes. This Arabidopsis thaliana (Mouse-ear cress) protein is WUSCHEL-related homeobox 1 (WOX1).